The primary structure comprises 70 residues: Translational regulator CsrA (70 aa).

This sequence belongs to the CsrA/RsmA family. As to quaternary structure, homodimer; the beta-strands of each monomer intercalate to form a hydrophobic core, while the alpha-helices form wings that extend away from the core.

The protein localises to the cytoplasm. Its function is as follows. A translational regulator that binds mRNA to regulate translation initiation and/or mRNA stability. Usually binds in the 5'-UTR at or near the Shine-Dalgarno sequence preventing ribosome-binding, thus repressing translation. Its main target seems to be the major flagellin gene, while its function is anatagonized by FliW. The sequence is that of Translational regulator CsrA from Rhodopirellula baltica (strain DSM 10527 / NCIMB 13988 / SH1).